We begin with the raw amino-acid sequence, 74 residues long: Conotoxin VxVIA (74 aa).

An N-terminal signal peptide occupies residues 1–22 (MKLTCVLIIAVLFLTAYQLATA). Positions 23–47 (ASHAKGKQKHRALRPADKHFRFTKR) are excised as a propeptide. 3 disulfide bridges follow: cysteine 48–cysteine 62, cysteine 55–cysteine 66, and cysteine 61–cysteine 73.

As to expression, expressed by the venom duct.

Its subcellular location is the secreted. In terms of biological role, when injected intracranially in mice, induces a series of symptoms such as quivering, climbing, scratching, barrel rolling and paralysis of limbs. Unexpectedly, no effect is observed on ionic currents when tested on locust DUM neuron. The sequence is that of Conotoxin VxVIA from Conus vexillum (Flag cone).